A 24-amino-acid chain; its full sequence is Neurotoxin-2 (24 aa).

The LCN-type CS-alpha/beta domain occupies 1-24 (EDGYLLNRDTGCKVSCGTCRYCND).

The protein belongs to the long (4 C-C) scorpion toxin superfamily. Sodium channel inhibitor family. Alpha subfamily. As to expression, expressed by the venom gland.

It localises to the secreted. Functionally, binds to sodium channels (Nav) and inhibits the inactivation of the activated channels, thereby blocking neuronal transmission. This toxin is active against mammals. In Hottentotta tamulus (Eastern Indian scorpion), this protein is Neurotoxin-2.